Here is a 170-residue protein sequence, read N- to C-terminus: ATP synthase subunit b (170 aa).

Residues 15-37 (GDILFQLLAMLILLALLKKYALG) traverse the membrane as a helical segment.

This sequence belongs to the ATPase B chain family. F-type ATPases have 2 components, F(1) - the catalytic core - and F(0) - the membrane proton channel. F(1) has five subunits: alpha(3), beta(3), gamma(1), delta(1), epsilon(1). F(0) has three main subunits: a(1), b(2) and c(10-14). The alpha and beta chains form an alternating ring which encloses part of the gamma chain. F(1) is attached to F(0) by a central stalk formed by the gamma and epsilon chains, while a peripheral stalk is formed by the delta and b chains. The F(1)F(0) complex interacts with SpoIIIJ and YqjG; YqgA is found in the same complex.

The protein resides in the cell membrane. F(1)F(0) ATP synthase produces ATP from ADP in the presence of a proton or sodium gradient. F-type ATPases consist of two structural domains, F(1) containing the extramembraneous catalytic core and F(0) containing the membrane proton channel, linked together by a central stalk and a peripheral stalk. During catalysis, ATP synthesis in the catalytic domain of F(1) is coupled via a rotary mechanism of the central stalk subunits to proton translocation. In terms of biological role, component of the F(0) channel, it forms part of the peripheral stalk, linking F(1) to F(0). The sequence is that of ATP synthase subunit b from Bacillus subtilis (strain 168).